A 190-amino-acid chain; its full sequence is UPF0301 protein PSPTO_5037 (190 aa).

Belongs to the UPF0301 (AlgH) family.

In Pseudomonas syringae pv. tomato (strain ATCC BAA-871 / DC3000), this protein is UPF0301 protein PSPTO_5037.